A 288-amino-acid polypeptide reads, in one-letter code: UDP-3-O-acyl-N-acetylglucosamine deacetylase (288 aa).

Zn(2+)-binding residues include His79, His236, and Asp240. Residue His263 is the Proton donor of the active site.

It belongs to the LpxC family. Zn(2+) serves as cofactor.

It carries out the reaction a UDP-3-O-[(3R)-3-hydroxyacyl]-N-acetyl-alpha-D-glucosamine + H2O = a UDP-3-O-[(3R)-3-hydroxyacyl]-alpha-D-glucosamine + acetate. The protein operates within glycolipid biosynthesis; lipid IV(A) biosynthesis; lipid IV(A) from (3R)-3-hydroxytetradecanoyl-[acyl-carrier-protein] and UDP-N-acetyl-alpha-D-glucosamine: step 2/6. Functionally, catalyzes the hydrolysis of UDP-3-O-myristoyl-N-acetylglucosamine to form UDP-3-O-myristoylglucosamine and acetate, the committed step in lipid A biosynthesis. In Rickettsia prowazekii (strain Madrid E), this protein is UDP-3-O-acyl-N-acetylglucosamine deacetylase.